The sequence spans 77 residues: MKLTCMMIVAVLFLTAWTFATADDSSNGLENLFSKAHHEMKNPEASKLNKRCIEQFDPCDMIRHTCCVGVCFLMACI.

The first 22 residues, 1 to 22, serve as a signal peptide directing secretion; it reads MKLTCMMIVAVLFLTAWTFATA. Residues 23-49 constitute a propeptide that is removed on maturation; it reads DDSSNGLENLFSKAHHEMKNPEASKLN. 3 disulfides stabilise this stretch: C52/C67, C59/C71, and C66/C76. M61 bears the Methionine sulfoxide; partial mark.

Belongs to the conotoxin O1 superfamily. In terms of tissue distribution, expressed by the venom duct.

Its subcellular location is the secreted. The sequence is that of Conotoxin King-Kong 1 from Conus textile (Cloth-of-gold cone).